The sequence spans 320 residues: MQPSALLLLGPTASGKTASALALARVLPIEIVSVDSALVYRDMDIGTAKPTAAERAACPHHLVDIVSPEESYSAAHFRRDALRLIGEIHARGRIPLLAGGTMLYFKALRDGLSDLPAADADLRADIDAAAARLGWPALHAQLAQIDPDAAARLDSADAQRIQRALEIVRLTGRPLAESYARREAAALPFRMLPIALVPSDRAVLHARIEQRFDQMLAAGLIDELRALRARYTLDATLPSMRCVGYRQVWEYLDGGDDYDTMRFKGIAATRQLAKRQLTWQRQFRDSWPGLVELDCLRPDLTNAVNTAAARLLTRSRHAAH.

Residue 10-17 coordinates ATP; that stretch reads GPTASGKT. Position 12 to 17 (12 to 17) interacts with substrate; the sequence is TASGKT. Interaction with substrate tRNA regions lie at residues 35–38, 159–163, and 241–246; these read DSAL, QRIQR, and RCVGYR.

Belongs to the IPP transferase family. Monomer. Requires Mg(2+) as cofactor.

The catalysed reaction is adenosine(37) in tRNA + dimethylallyl diphosphate = N(6)-dimethylallyladenosine(37) in tRNA + diphosphate. Its function is as follows. Catalyzes the transfer of a dimethylallyl group onto the adenine at position 37 in tRNAs that read codons beginning with uridine, leading to the formation of N6-(dimethylallyl)adenosine (i(6)A). The chain is tRNA dimethylallyltransferase from Aromatoleum aromaticum (strain DSM 19018 / LMG 30748 / EbN1) (Azoarcus sp. (strain EbN1)).